A 411-amino-acid chain; its full sequence is MRFIEEFINKGYFHQCTDLDRLTAITKETKIAAYIGFDCTATSLHIGSLMQIMILRLLQQHGHKPIVIIGGGTSKIGDPTWKDEVRKILSKEDIAKNAEGIKKSLSKFIKFGDGKSDAIMLDNAEWLDSFNYLDFLRDFGSYFSVNRMLTMDSVKLRLEREQHLSFLEFNYMLLQAYDFYYLSKHYNCSLQLGGSDQWGNIVMGADLIRKISGKEVFGMTTPLLTTSSGAKMGKTAAGAVWLNEDLLSPYDYYQYWRNCEDADIVRFAKLYSEFTQEELNRFESLAAEDINAAKKQLAYELTKLCHSEQAAKSALETAVKIFEEGQIDENLPTVVLEQEVLQAGISAYELFYEAGLATSKSEARKLIRGNGAKINDRLVADENMIINTNFLLDKKVIKLSAGKKRHILVRV.

L-tyrosine is bound at residue Tyr-34. Residues Cys-39–Ser-48 carry the 'HIGH' region motif. Positions 171 and 175 each coordinate L-tyrosine. The short motif at Lys-231–Thr-235 is the 'KMSKS' region element. Lys-234 serves as a coordination point for ATP. The region spanning Ile-345–Val-411 is the S4 RNA-binding domain.

It belongs to the class-I aminoacyl-tRNA synthetase family. TyrS type 1 subfamily. As to quaternary structure, homodimer.

It is found in the cytoplasm. The enzyme catalyses tRNA(Tyr) + L-tyrosine + ATP = L-tyrosyl-tRNA(Tyr) + AMP + diphosphate + H(+). In terms of biological role, catalyzes the attachment of tyrosine to tRNA(Tyr) in a two-step reaction: tyrosine is first activated by ATP to form Tyr-AMP and then transferred to the acceptor end of tRNA(Tyr). This chain is Tyrosine--tRNA ligase, found in Rickettsia rickettsii (strain Sheila Smith).